Reading from the N-terminus, the 251-residue chain is Hydroxyacylglutathione hydrolase (251 aa).

Residues His53, His55, Asp57, His58, His110, Asp127, and His165 each coordinate Zn(2+).

The protein belongs to the metallo-beta-lactamase superfamily. Glyoxalase II family. In terms of assembly, monomer. Requires Zn(2+) as cofactor.

The catalysed reaction is an S-(2-hydroxyacyl)glutathione + H2O = a 2-hydroxy carboxylate + glutathione + H(+). Its pathway is secondary metabolite metabolism; methylglyoxal degradation; (R)-lactate from methylglyoxal: step 2/2. Thiolesterase that catalyzes the hydrolysis of S-D-lactoyl-glutathione to form glutathione and D-lactic acid. This chain is Hydroxyacylglutathione hydrolase, found in Salmonella gallinarum (strain 287/91 / NCTC 13346).